The primary structure comprises 1664 residues: MYND-type zinc finger-containing chromatin reader Zmynd8 (1664 aa).

3 stretches are compositionally biased toward low complexity: residues 1–16, 30–40, and 61–84; these read MESTDSSDSSGDSLKS, SPQPQLQSSSL, and SAPPGSANCSSNSSSSSPSNINVG. 3 disordered regions span residues 1–84, 251–271, and 295–323; these read MEST…INVG, SLSNSWSNDDKGPRRSNLRSE, and LALNTSGEGESSLFSDASDTKTTTAKTPE. Over residues 258–271 the composition is skewed to basic and acidic residues; sequence NDDKGPRRSNLRSE. The span at 296–308 shows a compositional bias: polar residues; the sequence is ALNTSGEGESSLF. Over residues 309-320 the composition is skewed to low complexity; it reads SDASDTKTTTAK. The PHD-type zinc finger occupies 343-389; that stretch reads DPFCWKCRGCGKLMPCSKCLRSFHSYCVRPATTKFDSSWKCPECQVI. Cys-346, Cys-349, Cys-358, Cys-361, His-366, Cys-369, Cys-383, and Cys-386 together coordinate Zn(2+). Positions 401-504 constitute a Bromo domain; that stretch reads VSVDLLSQLL…KVCRQEANEI (104 aa). 3 residues coordinate Zn(2+): Cys-507, Cys-510, and Cys-525. The region spanning 528–579 is the PWWP domain; the sequence is PHLLLWAKLKGFPYWPAKAMGSSNSTLVNVRFFGKHDRAFVPVKDCFLYSAQ. 4 disordered regions span residues 672–693, 747–815, 857–905, and 919–1139; these read KTKATESGNESDQSPSPTKKLS, ESVE…QNEN, KIPR…RQQE, and TEVM…TNTS. A compositionally biased stretch (polar residues) spans 676 to 690; that stretch reads TESGNESDQSPSPTK. Over residues 775–784 the composition is skewed to basic residues; that stretch reads HKRKSKHARK. The span at 785 to 800 shows a compositional bias: basic and acidic residues; that stretch reads QHDNQDNQIEEAEKTG. Over residues 874–884 the composition is skewed to pro residues; the sequence is IPLPTAPPPKQ. Residues 935–952 show a composition bias toward polar residues; sequence PANQPQTDQVPLQQETIT. Residues 953–962 show a composition bias toward low complexity; it reads AQPESQMPAA. The span at 1006 to 1019 shows a compositional bias: pro residues; the sequence is PPMPLPMPPPPPLP. A compositionally biased stretch (polar residues) spans 1037–1053; sequence TTIQRVSQKQGGKSTDT. The span at 1073–1097 shows a compositional bias: low complexity; the sequence is SPTHSPLLSTAPSPSASPKPTSTLA. The Zn(2+) site is built by Cys-1399, Cys-1402, Cys-1410, Cys-1411, Cys-1417, Cys-1421, His-1429, and Cys-1433. The segment at 1399–1433 adopts an MYND-type zinc-finger fold; sequence CANCMREAQLYCCWNTSYCDYPCQQLHWPGHSATC. The disordered stretch occupies residues 1613–1648; that stretch reads VPKATGRSGKNNSRMRQTYSNNINNSNPQGMRCNNN. The span at 1620-1648 shows a compositional bias: polar residues; it reads SGKNNSRMRQTYSNNINNSNPQGMRCNNN.

The protein resides in the nucleus. The protein localises to the chromosome. Chromatin reader that recognizes specific histone signatures to regulate transcription. Plays a role in neuronal development. This Drosophila melanogaster (Fruit fly) protein is MYND-type zinc finger-containing chromatin reader Zmynd8.